Consider the following 865-residue polypeptide: MPHVDLNPLKQRMQAARAAAVAQFRQHPRPDMLLTELRRIVDQALRELVKLCPLPAGATLAAVGGYGRGELYPHSDVDLLILLPQPPSAADARAVEALVAALWDLGLEPGHSVRTLEDCEREARGDITVETALLESRWLAGSRTLMKRLDSAMQARLDAAVFFQAKRVEMQQRHARYQDTPYALEPNCKESPGGLRDLQVILWMARAAGFGHSWREVAQAGLLTSSEARDLRRAEQAFKRLRIELHLLTGRREDRVLFDLQPGLAAVYGIASTATRRASELLMQRYYWAARLVTQLNVILVQNIEERLFPRPDSDARLIDDDFRNLRERLDIVREDGFERNPTLLLRAFLVMQQHPELIGMSARTLRAIWHSRHRIDAQFRRNPVNRKLFLQILQQPRGIVHELRRMTMLNILPRYLPVFRRIVGQMQHDLFHVYTVDQHTLAVVRNLRRFTMPEHAQEYPLASQLIAGLDRHWLLYVAALFHDIAKGRGGDHSELGAREVRRFAQDHGLDPADAELVEFLVRHHLLMSAVAQKRDLSDPQVVRDFAAQVGDERRLAALYLLTVADIRGTSPRVWNAWKGKLLEDLFRLTLAALGGAHADAHTVLTERKDEAARLTRLAGLRDDAREAFWNQLDIAYFLRHDASEIAWHTRHLYYQVAPDEPVVRVRPTEHGEGLQVMVYTRDAPDLFVTTCGYFDAKSLSVQDARVHTTRHGWALDSFIVLAPEGFADLRAQATLVEHELAERLRDPHAARHAHAPRRLPHSHARRSRVFPVMPQAELSPDERSQSWRLSVTATDRPGLLYALARVFAEHGVDLIMAKIMTLGERVEDVFIVSGSALERPRSQMQFERAILDALAGDEPRQQAA.

The uridylyltransferase stretch occupies residues 1 to 318 (MPHVDLNPLK…FPRPDSDARL (318 aa)). Residues 319-675 (IDDDFRNLRE…VRPTEHGEGL (357 aa)) form a uridylyl-removing region. The 123-residue stretch at 437-559 (VDQHTLAVVR…VGDERRLAAL (123 aa)) folds into the HD domain. ACT domains follow at residues 676 to 762 (QVMV…RLPH) and 789 to 865 (RLSV…QQAA). The interval 747 to 767 (DPHAARHAHAPRRLPHSHARR) is disordered. Residues 751–767 (ARHAHAPRRLPHSHARR) are compositionally biased toward basic residues.

It belongs to the GlnD family. The cofactor is Mg(2+).

It carries out the reaction [protein-PII]-L-tyrosine + UTP = [protein-PII]-uridylyl-L-tyrosine + diphosphate. It catalyses the reaction [protein-PII]-uridylyl-L-tyrosine + H2O = [protein-PII]-L-tyrosine + UMP + H(+). Its activity is regulated as follows. Uridylyltransferase (UTase) activity is inhibited by glutamine, while glutamine activates uridylyl-removing (UR) activity. In terms of biological role, modifies, by uridylylation and deuridylylation, the PII regulatory proteins (GlnB and homologs), in response to the nitrogen status of the cell that GlnD senses through the glutamine level. Under low glutamine levels, catalyzes the conversion of the PII proteins and UTP to PII-UMP and PPi, while under higher glutamine levels, GlnD hydrolyzes PII-UMP to PII and UMP (deuridylylation). Thus, controls uridylylation state and activity of the PII proteins, and plays an important role in the regulation of nitrogen assimilation and metabolism. The polypeptide is Bifunctional uridylyltransferase/uridylyl-removing enzyme (Bordetella bronchiseptica (strain ATCC BAA-588 / NCTC 13252 / RB50) (Alcaligenes bronchisepticus)).